We begin with the raw amino-acid sequence, 95 residues long: Aspartyl/glutamyl-tRNA(Asn/Gln) amidotransferase subunit C (95 aa).

This sequence belongs to the GatC family. In terms of assembly, heterotrimer of A, B and C subunits.

The enzyme catalyses L-glutamyl-tRNA(Gln) + L-glutamine + ATP + H2O = L-glutaminyl-tRNA(Gln) + L-glutamate + ADP + phosphate + H(+). The catalysed reaction is L-aspartyl-tRNA(Asn) + L-glutamine + ATP + H2O = L-asparaginyl-tRNA(Asn) + L-glutamate + ADP + phosphate + 2 H(+). In terms of biological role, allows the formation of correctly charged Asn-tRNA(Asn) or Gln-tRNA(Gln) through the transamidation of misacylated Asp-tRNA(Asn) or Glu-tRNA(Gln) in organisms which lack either or both of asparaginyl-tRNA or glutaminyl-tRNA synthetases. The reaction takes place in the presence of glutamine and ATP through an activated phospho-Asp-tRNA(Asn) or phospho-Glu-tRNA(Gln). This chain is Aspartyl/glutamyl-tRNA(Asn/Gln) amidotransferase subunit C, found in Methylocella silvestris (strain DSM 15510 / CIP 108128 / LMG 27833 / NCIMB 13906 / BL2).